We begin with the raw amino-acid sequence, 313 residues long: Pseudouridine-5'-phosphate glycosidase (313 aa).

E34 serves as the catalytic Proton donor. The substrate site is built by K95 and V115. D147 provides a ligand contact to Mn(2+). 149 to 151 (SAD) is a binding site for substrate. K168 (nucleophile) is an active-site residue.

Belongs to the pseudouridine-5'-phosphate glycosidase family. As to quaternary structure, homotrimer. Requires Mn(2+) as cofactor.

The catalysed reaction is D-ribose 5-phosphate + uracil = psi-UMP + H2O. Its function is as follows. Catalyzes the reversible cleavage of pseudouridine 5'-phosphate (PsiMP) to ribose 5-phosphate and uracil. Functions biologically in the cleavage direction, as part of a pseudouridine degradation pathway. This is Pseudouridine-5'-phosphate glycosidase from Deinococcus radiodurans (strain ATCC 13939 / DSM 20539 / JCM 16871 / CCUG 27074 / LMG 4051 / NBRC 15346 / NCIMB 9279 / VKM B-1422 / R1).